The chain runs to 190 residues: MKCIVGLGNIGKRFELTRHNIGFEVIDYILKKHNFSLDKQKFKGAYTIERLNGDKVLFIEPMTMMNLSGEAVGPLMDYYNVEVEDLIVLYDDLDLSQGQIRLRQKGSAGGHNGMKSIIKHLGTDQFKRIRIGVGRPTNGMSVPDYVLQKFSKEEMITMDKVIEHSAHAVEAFIESSRFDHVMNQYNGEVN.

Residue F14 participates in tRNA binding. The active-site Proton acceptor is the H19. Positions 64, 66, and 112 each coordinate tRNA.

It belongs to the PTH family. In terms of assembly, monomer.

The protein localises to the cytoplasm. It carries out the reaction an N-acyl-L-alpha-aminoacyl-tRNA + H2O = an N-acyl-L-amino acid + a tRNA + H(+). Its function is as follows. Hydrolyzes ribosome-free peptidyl-tRNAs (with 1 or more amino acids incorporated), which drop off the ribosome during protein synthesis, or as a result of ribosome stalling. In terms of biological role, catalyzes the release of premature peptidyl moieties from peptidyl-tRNA molecules trapped in stalled 50S ribosomal subunits, and thus maintains levels of free tRNAs and 50S ribosomes. This is Peptidyl-tRNA hydrolase from Staphylococcus haemolyticus (strain JCSC1435).